The chain runs to 239 residues: Tumor necrosis factor ligand superfamily member 14 (239 aa).

The Cytoplasmic segment spans residues 1-37 (MESVVQPSVFVVDGQTDIPFRRLEQNHRRRRCGTVQV). A helical; Signal-anchor for type II membrane protein membrane pass occupies residues 38-58 (SLALVLLLGAGLATQGWFLLR). The Extracellular segment spans residues 59-239 (LHQRLGDIVA…TRSYFGAFMV (181 aa)). Residues 92 to 239 (PAAHLTGANA…TRSYFGAFMV (148 aa)) enclose the THD domain. Asn100 is a glycosylation site (N-linked (GlcNAc...) asparagine). Cys152 and Cys187 are joined by a disulfide. N-linked (GlcNAc...) asparagine glycosylation is present at Asn191.

The protein belongs to the tumor necrosis factor family. Homotrimer. Interacts with TNFRSF14. In terms of processing, the soluble form derives from the membrane form by proteolytic processing.

It localises to the cell membrane. The protein localises to the secreted. In terms of biological role, cytokine that binds to TNFRSF3/LTBR. Binding to the decoy receptor TNFRSF6B modulates its effects. Activates NFKB and stimulates the proliferation of T-cells. Acts as a ligand for TNFRSF14/HVEM. Upon binding to TNFRSF14/HVEM, delivers costimulatory signals to T cells, leading to T cell proliferation and IFNG production. The protein is Tumor necrosis factor ligand superfamily member 14 (Tnfsf14) of Mus musculus (Mouse).